The chain runs to 202 residues: Thymidylate kinase (202 aa).

13–20 (GTDGAGKS) provides a ligand contact to ATP.

Belongs to the thymidylate kinase family.

It catalyses the reaction dTMP + ATP = dTDP + ADP. Its function is as follows. Phosphorylation of dTMP to form dTDP in both de novo and salvage pathways of dTTP synthesis. The polypeptide is Thymidylate kinase (Desulfotalea psychrophila (strain LSv54 / DSM 12343)).